A 201-amino-acid chain; its full sequence is UPF0301 protein ROP_34500 (201 aa).

It belongs to the UPF0301 (AlgH) family.

The chain is UPF0301 protein ROP_34500 from Rhodococcus opacus (strain B4).